We begin with the raw amino-acid sequence, 229 residues long: Ribosome maturation factor RimM (229 aa).

Residues Ala-148–Tyr-229 form the PRC barrel domain.

It belongs to the RimM family. Binds ribosomal protein uS19.

It is found in the cytoplasm. In terms of biological role, an accessory protein needed during the final step in the assembly of 30S ribosomal subunit, possibly for assembly of the head region. Essential for efficient processing of 16S rRNA. May be needed both before and after RbfA during the maturation of 16S rRNA. It has affinity for free ribosomal 30S subunits but not for 70S ribosomes. This Burkholderia pseudomallei (strain 1710b) protein is Ribosome maturation factor RimM.